Here is a 1565-residue protein sequence, read N- to C-terminus: Synemin (1565 aa).

A head region spans residues 1–10 (MLSWRLQTGP). The coil 1A stretch occupies residues 11 to 49 (EKAELQELNARLYDYVCRVRELERENLLLEEELRGRRGR). The tract at residues 11 to 320 (EKAELQELNA…YRALLEGESN (310 aa)) is interaction with DMD and UTRN. One can recognise an IF rod domain in the interval 11 to 322 (EKAELQELNA…ALLEGESNPE (312 aa)). The linker 1 stretch occupies residues 50–58 (EGLWAEGQA). Positions 59 to 163 (RCAEEARSLR…ELRARAASLT (105 aa)) are coil 1B. Residues 164–186 (MHFRARATGPAAPPPRLREVHDS) form a linker 12 region. Residues 187-300 (YALLVAESWR…LRDYQDLLQV (114 aa)) form a coil 2 region. The segment at 301-1565 (KTGLSLEVAT…EEEENDGHWF (1265 aa)) is tail. The disordered stretch occupies residues 401-421 (SGYSSSATTQQENSYGKAVSS). A compositionally biased stretch (polar residues) spans 402 to 421 (GYSSSATTQQENSYGKAVSS). Serine 429 is modified (phosphoserine). Positions 472–609 (YRDRRDKVAA…VKDAGGGTGR (138 aa)) are disordered. The span at 498–577 (KKTEVKATRE…KEKSVREREV (80 aa)) shows a compositional bias: basic and acidic residues. A phosphothreonine mark is found at threonine 598 and threonine 651. Serine 653 and serine 777 each carry phosphoserine. Over residues 1019–1040 (LSKDEASEMEKAVESVVRESLS) the composition is skewed to basic and acidic residues. The disordered stretch occupies residues 1019–1060 (LSKDEASEMEKAVESVVRESLSRQRSPAPGSPDEEGGAEAPA). Phosphoserine is present on residues serine 1044, serine 1049, serine 1077, serine 1087, serine 1181, and serine 1184. A disordered region spans residues 1080–1105 (SEVAGGASHSSGQRTPQGPVSATVEV). Residues 1087 to 1105 (SHSSGQRTPQGPVSATVEV) show a composition bias toward polar residues. The interaction with TLN1 and VCL stretch occupies residues 1152-1463 (VSAGGDLSQA…GPKETSFTFQ (312 aa)). Disordered stretches follow at residues 1198 to 1221 (EAWG…GRHS) and 1332 to 1415 (QLGE…ETSE). The segment at 1244-1563 (GKVGDYFATE…DNEEEENDGH (320 aa)) is interaction with DMD and UTRN. The span at 1354–1379 (ATHSHTSGRQTVMTEKSTFQSVVSES) shows a compositional bias: polar residues. Position 1435 is a phosphoserine (serine 1435). Residue arginine 1487 is modified to Omega-N-methylarginine. The disordered stretch occupies residues 1505 to 1525 (FKASAGEGDQAHREQGKEQAM). Residues 1513-1525 (DQAHREQGKEQAM) show a composition bias toward basic and acidic residues.

It belongs to the intermediate filament family. Interacts with GFAP and VIM. Isoform 1 interacts with TLN1 and VCL. Isoform 2 interacts with DES and DTNA. Isoform 1 and isoform 2 interact with DMD and UTRN. As to expression, isoform 2 is strongly detected in adult heart, fetal skeletal muscles and fetal heart. Isoform 1 is weakly detected in fetal heart and also in fetal skeletal muscle. Isoform 1 and isoform 2 are detected in adult bladder (at protein level). The mRNA is predominantly expressed in heart and muscle with some expression in brain which may be due to tissue-specific isoforms.

It is found in the cytoplasm. The protein localises to the cytoskeleton. The protein resides in the cell junction. Its subcellular location is the adherens junction. Type-VI intermediate filament (IF) which plays an important cytoskeletal role within the muscle cell cytoskeleton. It forms heteromeric IFs with desmin and/or vimentin, and via its interaction with cytoskeletal proteins alpha-dystrobrevin, dystrophin, talin-1, utrophin and vinculin, is able to link these heteromeric IFs to adherens-type junctions, such as to the costameres, neuromuscular junctions, and myotendinous junctions within striated muscle cells. The sequence is that of Synemin from Homo sapiens (Human).